The primary structure comprises 112 residues: Small ribosomal subunit protein uS11c (112 aa).

This sequence belongs to the universal ribosomal protein uS11 family. In terms of assembly, part of the 30S ribosomal subunit.

The protein localises to the plastid. This Euglena longa (Euglenophycean alga) protein is Small ribosomal subunit protein uS11c.